A 183-amino-acid chain; its full sequence is TATA-box-binding protein (183 aa).

2 consecutive repeat copies span residues Ile7–Leu83 and Val99–Leu177.

This sequence belongs to the TBP family.

General factor that plays a role in the activation of archaeal genes transcribed by RNA polymerase. Binds specifically to the TATA box promoter element which lies close to the position of transcription initiation. This Methanothrix thermoacetophila (strain DSM 6194 / JCM 14653 / NBRC 101360 / PT) (Methanosaeta thermophila) protein is TATA-box-binding protein.